Here is a 197-residue protein sequence, read N- to C-terminus: Probable UbiX-like flavin prenyltransferase (197 aa).

FMN contacts are provided by residues 9–11 (GAT), Ser-36, 87–90 (SMKT), and Arg-122.

Belongs to the UbiX/PAD1 family. YclB subfamily. As to quaternary structure, homododecamer.

It carries out the reaction dimethylallyl phosphate + FMNH2 = prenylated FMNH2 + phosphate. Flavin prenyltransferase that catalyzes the synthesis of the prenylated FMN cofactor (prenyl-FMN) for phenolic acid decarboxylase C. Involved in the decarboxylation and detoxification of phenolic derivatives under both aerobic and anaerobic conditions. The polypeptide is Probable UbiX-like flavin prenyltransferase (ecdB) (Escherichia coli O111:H-).